Consider the following 244-residue polypeptide: Uridylate kinase (244 aa).

11 to 14 (KLSG) is an ATP binding site. Residues 19-24 (GSLGYG) form an involved in allosteric activation by GTP region. Residue Gly-53 coordinates UMP. 2 residues coordinate ATP: Gly-54 and Arg-58. UMP-binding positions include Asp-73 and 134–141 (SGNPFFTT). Residues Thr-161, Tyr-167, and Asp-170 each contribute to the ATP site.

This sequence belongs to the UMP kinase family. Homohexamer.

The protein localises to the cytoplasm. It carries out the reaction UMP + ATP = UDP + ADP. The protein operates within pyrimidine metabolism; CTP biosynthesis via de novo pathway; UDP from UMP (UMPK route): step 1/1. Allosterically activated by GTP. Inhibited by UTP. Functionally, catalyzes the reversible phosphorylation of UMP to UDP. This chain is Uridylate kinase, found in Trichodesmium erythraeum (strain IMS101).